Here is a 900-residue protein sequence, read N- to C-terminus: MSDYKKTLSMPNTNFEMKANLSVKETKIQENWVLEKIEKKILAKNKSNTPFIIADGPPYANGDLHTGHALNKILKDIILRFKASVGFYTKYIPGWDTHGLPIEQEMAKRGLNKNANQTITEKRKNCKNFAIENVYKQRDQFRRLGILSEMDEIYVTCDLDYVIRQIKIFNKMLSKGLIYQDLKPVYWSWSSQTALADAEIIYQDVESDSIYVSLEILDKNEFVSKGDKVIIWTTTPWTLPSNLAIAANPKVTYCRVQVENSVYVISKNLVEKLAETLEWTNYEILSEFSGKKLENLPYKSPISDKKCKIIVDGYVSDSDGTGLVHNAPGFGHEDYLACKKYNIKPYCPIDNLGKFTGEVNDKELAGLFYKDANPIIIERLAKKKLLLKASKFTHSAAHDWRTKKPVIYRATKQWFVNIDKISKEIVAALNKVKSIDNTIIKKIKEMVLNRQEWCISRQRIWGVPICIIYDKDYNPILDPKLLNNIVDILNDEGINAWYNEDAKYFLTDSYNTSKKYIKETDIMDVWFDSGTSYSVLQADKLGYPADLYFEGKDQFRGWFNSSLITSVAAFKKSPYKELLTHGFVLDENGNKMSKSLGNIIDPLQVCKEYGADVLRLWVASVDFSKDVSISKDIIAQNAELYRRIRNTLFRFILGNLNGFNLKKLRGAKYSEADLYVLSCLSNDIKTIKACYDKYDFKQIVKIVSKNVADLSSWYFDYIKDPLYCEKEDNEQRIAIQATLYQLLDSYLRILAPIIPHTCEEAYEFFDKKDKQKSVHLEGFTNFKIDSKYKVDFKKWEEFFDLKDKVYSEIEKTRNEKVINSKGQAHITIHSKSLPFDEQTLERYLGVAKVEFKVKEKDGTTIKVKNSKYARCERCWNYYPTNLIANELCERCKKVIGNKKI.

The short motif at 58–68 is the 'HIGH' region element; the sequence is PYANGDLHTGH. Residue glutamate 550 coordinates L-isoleucyl-5'-AMP. The 'KMSKS' region signature appears at 591–595; it reads KMSKS. Residue lysine 594 coordinates ATP. Zn(2+) contacts are provided by cysteine 871, cysteine 874, cysteine 888, and cysteine 891.

Belongs to the class-I aminoacyl-tRNA synthetase family. IleS type 1 subfamily. As to quaternary structure, monomer. Requires Zn(2+) as cofactor.

The protein resides in the cytoplasm. The catalysed reaction is tRNA(Ile) + L-isoleucine + ATP = L-isoleucyl-tRNA(Ile) + AMP + diphosphate. Catalyzes the attachment of isoleucine to tRNA(Ile). As IleRS can inadvertently accommodate and process structurally similar amino acids such as valine, to avoid such errors it has two additional distinct tRNA(Ile)-dependent editing activities. One activity is designated as 'pretransfer' editing and involves the hydrolysis of activated Val-AMP. The other activity is designated 'posttransfer' editing and involves deacylation of mischarged Val-tRNA(Ile). The chain is Isoleucine--tRNA ligase from Malacoplasma penetrans (strain HF-2) (Mycoplasma penetrans).